Consider the following 491-residue polypeptide: Endoglucanase 14 (491 aa).

Positions 1-31 (MSQLKIGSSQCLWTSICIVLFVLSMARGAVS) are cleaved as a signal peptide. D86 serves as the catalytic Nucleophile. N397 carries N-linked (GlcNAc...) asparagine glycosylation. Active-site residues include H413, D465, and E474.

It belongs to the glycosyl hydrolase 9 (cellulase E) family.

It localises to the secreted. It carries out the reaction Endohydrolysis of (1-&gt;4)-beta-D-glucosidic linkages in cellulose, lichenin and cereal beta-D-glucans.. The sequence is that of Endoglucanase 14 from Arabidopsis thaliana (Mouse-ear cress).